The primary structure comprises 467 residues: Signal transduction histidine-protein kinase BaeS (467 aa).

Residues 1 to 11 are Cytoplasmic-facing; that stretch reads MKFWRPGITGK. A helical transmembrane segment spans residues 12 to 32; the sequence is LFLAIFATCIVLLISMHWAVR. At 33 to 167 the chain is on the periplasmic side; it reads ISFERGFIDY…NFDKQQRQTS (135 aa). A helical membrane pass occupies residues 168–186; the sequence is WLIVALATLLAALATFLLA. Residues 187–239 form the HAMP domain; it reads RGLLAPVKRLVDGTHKLAAGDFTTRVTPTSEDELGKLAQDFNQLASTLEKNQQ. At 187-467 the chain is on the cytoplasmic side; sequence RGLLAPVKRL…PLERDLQREV (281 aa). In terms of domain architecture, Histidine kinase spans 247 to 461; the sequence is DISHELRTPL…SITVELPLER (215 aa). H250 is subject to Phosphohistidine; by autocatalysis.

Post-translationally, autophosphorylated.

The protein localises to the cell inner membrane. It catalyses the reaction ATP + protein L-histidine = ADP + protein N-phospho-L-histidine.. Functionally, member of the two-component regulatory system BaeS/BaeR which responds to envelope stress. Activates expression of periplasmic chaperone spy in response to spheroplast formation, indole and P pili protein PapG overexpression. Activates BaeR by phosphorylation which then activates the mdtABCD and probably the CRISPR-Cas casABCDE-ygbT-ygbF operons. The sequence is that of Signal transduction histidine-protein kinase BaeS from Escherichia coli (strain K12).